The primary structure comprises 117 residues: MAFLMSEFIGLGLAGAGVLSNALLRRQELQLQKQALENGLVLKADQLGRLGFNPNEVKNVIVGNSFSSNVRLSNMHNDASVVNAYNVYNPASNGIRKKIKSLNNSVKIYNTTGESSV.

This sequence belongs to the lagovirus VP2 protein family. Homooligomer. The portal-like structure consists in 12 copies of VP2. Interacts with capsid protein VP1.

It localises to the virion. The protein resides in the host cytoplasm. In terms of biological role, minor structural protein that forms a portal-like structure at a unique three-fold axis of symmetry, following binding to the host receptor. The channel formed by VP2 may allow the delivery of the viral genome through the host endosomal membrane. The sequence is that of Minor capsid protein VP2 from Oryctolagus cuniculus (Rabbit).